Reading from the N-terminus, the 428-residue chain is 3-oxo-tetronate kinase (428 aa).

Residues S267, 365–368 (GGET), and G409 each bind ATP.

It belongs to the four-carbon acid sugar kinase family.

It carries out the reaction 3-dehydro-L-erythronate + ATP = 3-dehydro-4-O-phospho-L-erythronate + ADP + H(+). It catalyses the reaction 3-dehydro-D-erythronate + ATP = 3-dehydro-4-O-phospho-D-erythronate + ADP + H(+). In terms of biological role, catalyzes the ATP-dependent phosphorylation of 3-oxo-tetronate to 3-oxo-tetronate 4-phosphate. In Burkholderia multivorans (strain ATCC 17616 / 249), this protein is 3-oxo-tetronate kinase.